A 220-amino-acid chain; its full sequence is Large ribosomal subunit protein bL21c (220 aa).

This sequence belongs to the bacterial ribosomal protein bL21 family. As to quaternary structure, part of the 50S ribosomal subunit.

The protein resides in the plastid. Its subcellular location is the chloroplast. Functionally, this protein binds to 23S ribosomal RNA in the presence of protein L20. The protein is Large ribosomal subunit protein bL21c (RPL21) of Arabidopsis thaliana (Mouse-ear cress).